Reading from the N-terminus, the 222-residue chain is Octanoyltransferase (222 aa).

A BPL/LPL catalytic domain is found at 32–207 (RDRPDVLMLL…AFARVFGVQC (176 aa)). Substrate contacts are provided by residues 72 to 79 (RGGEVTYH), 139 to 141 (ALG), and 152 to 154 (GFA). The active-site Acyl-thioester intermediate is the Cys-170.

It belongs to the LipB family.

It is found in the cytoplasm. The enzyme catalyses octanoyl-[ACP] + L-lysyl-[protein] = N(6)-octanoyl-L-lysyl-[protein] + holo-[ACP] + H(+). Its pathway is protein modification; protein lipoylation via endogenous pathway; protein N(6)-(lipoyl)lysine from octanoyl-[acyl-carrier-protein]: step 1/2. In terms of biological role, catalyzes the transfer of endogenously produced octanoic acid from octanoyl-acyl-carrier-protein onto the lipoyl domains of lipoate-dependent enzymes. Lipoyl-ACP can also act as a substrate although octanoyl-ACP is likely to be the physiological substrate. The chain is Octanoyltransferase from Gloeobacter violaceus (strain ATCC 29082 / PCC 7421).